We begin with the raw amino-acid sequence, 568 residues long: NADPH oxidase 3 (568 aa).

At 1-12 the chain is on the cytoplasmic side; that stretch reads MPTCWILNESVS. The chain crosses the membrane as a helical span at residues 13-33; it reads FVVALLWLAINIYLFIDTFCW. The Extracellular portion of the chain corresponds to 34-49; it reads YAEEESFFYTRVILGS. Residues 50-70 traverse the membrane as a helical segment; the sequence is ALAWARASAVCLNFNCMLILL. Positions 55 to 284 constitute a Ferric oxidoreductase domain; the sequence is RASAVCLNFN…VVLYACEIII (230 aa). The Cytoplasmic portion of the chain corresponds to 71 to 103; it reads PVSRNFVSLVRGTSVCCRGPWRRQLDKNLKFHK. A helical membrane pass occupies residues 104-124; that stretch reads LVAYGIAVNSVIHIVAHLFNL. Over 125–167 the chain is Extracellular; the sequence is ERYHLGQAKDAEGLLAALSKLGNAPNESYLNPVRTLYTGTTTQ. Residues 168–188 form a helical membrane-spanning segment; it reads LLMTVSGITGLVISLALILIM. Residues 189–201 lie on the Cytoplasmic side of the membrane; that stretch reads TSSTEFIRQSSYE. A helical membrane pass occupies residues 202–222; that stretch reads LFWYTHHIFIFLFISLAIHGG. The Extracellular portion of the chain corresponds to 223-395; that stretch reads GRIIRGQTPE…DGPFGGSLAD (173 aa). N-linked (GlcNAc...) asparagine glycosylation occurs at N238. An FAD-binding FR-type domain is found at 285 to 395; the sequence is RFWRSHQEVV…DGPFGGSLAD (111 aa). Residues 396–416 form a helical membrane-spanning segment; it reads VFHYPVSVCIATGIGVTPFAS. At 417 to 568 the chain is on the cytoplasmic side; that stretch reads LLKSVWYKCC…VHFYYNKENF (152 aa).

In terms of assembly, forms a heterodimer with CYBA/p22phox which is essential for its activity and cell membrane localization. Heme is required as a cofactor. In terms of processing, N-glycosylated in a CYBA/p22phox-dependent manner. As to expression, expressed in the inner ear by the spiral glanglia and the organ of Corti.

The protein localises to the cell membrane. It catalyses the reaction NADPH + 2 O2 = 2 superoxide + NADP(+) + H(+). Its activity is regulated as follows. Activated by the ototoxic drug cisplatin. Activated by NOXO1. Cooperatively activated by NCF1 and NCF2 or NOXA1 in a phorbol 12-myristate 13-acetate (PMA)-dependent manner. Inhibited by diphenyleneiodonium chloride. Functionally, NADPH oxidase that catalyzes the generation of superoxide from molecular oxygen utilizing NADPH as an electron donor, upon formation of a complex with CYBA/p22phox. Plays a role in the biogenesis of otoconia/otolith, which are crystalline structures of the inner ear involved in the perception of gravity. The chain is NADPH oxidase 3 (Nox3) from Rattus norvegicus (Rat).